The following is a 606-amino-acid chain: Elongation factor 4 (606 aa).

In terms of domain architecture, tr-type G spans 10-192 (ENIRNFSIIA…AIVQQLPAPK (183 aa)). GTP-binding positions include 22-27 (DHGKST) and 139-142 (NKID).

The protein belongs to the TRAFAC class translation factor GTPase superfamily. Classic translation factor GTPase family. LepA subfamily.

The protein localises to the cell membrane. The catalysed reaction is GTP + H2O = GDP + phosphate + H(+). Required for accurate and efficient protein synthesis under certain stress conditions. May act as a fidelity factor of the translation reaction, by catalyzing a one-codon backward translocation of tRNAs on improperly translocated ribosomes. Back-translocation proceeds from a post-translocation (POST) complex to a pre-translocation (PRE) complex, thus giving elongation factor G a second chance to translocate the tRNAs correctly. Binds to ribosomes in a GTP-dependent manner. In Lawsonia intracellularis (strain PHE/MN1-00), this protein is Elongation factor 4.